Consider the following 424-residue polypeptide: GTPase Obg (424 aa).

Residues 2–158 enclose the Obg domain; the sequence is AKFIDQVKIM…YEANIVLKIL (157 aa). Positions 159-326 constitute an OBG-type G domain; it reads SDVGLVGLPS…LKKIIWEFLE (168 aa). GTP-binding positions include 165-172, 190-194, 211-214, 280-283, and 307-309; these read GLPSCGKS, FTTLV, DLPG, NKSD, and SAL. Ser172 and Thr192 together coordinate Mg(2+). Residues 344-422 enclose the OCT domain; that stretch reads KEINYEPDFV…IYQHKFEWEE (79 aa).

The protein belongs to the TRAFAC class OBG-HflX-like GTPase superfamily. OBG GTPase family. In terms of assembly, monomer. Mg(2+) serves as cofactor.

The protein localises to the cytoplasm. An essential GTPase which binds GTP, GDP and possibly (p)ppGpp with moderate affinity, with high nucleotide exchange rates and a fairly low GTP hydrolysis rate. Plays a role in control of the cell cycle, stress response, ribosome biogenesis and in those bacteria that undergo differentiation, in morphogenesis control. In Mycoplasmopsis synoviae (strain 53) (Mycoplasma synoviae), this protein is GTPase Obg.